Here is a 224-residue protein sequence, read N- to C-terminus: Small ribosomal subunit protein eS1 (224 aa).

This sequence belongs to the eukaryotic ribosomal protein eS1 family.

The sequence is that of Small ribosomal subunit protein eS1 from Methanococcus maripaludis (strain C7 / ATCC BAA-1331).